The sequence spans 306 residues: 26S proteasome regulatory subunit RPN11 (306 aa).

The MPN domain occupies 27-162 (VYISSIALLK…IDAFRLIDTG (136 aa)). Residues His-109, His-111, and Asp-122 each coordinate Zn(2+). The JAMM motif signature appears at 109–122 (HSHPGFGCWLSSVD).

This sequence belongs to the peptidase M67A family.

In terms of biological role, acts as a regulatory subunit of the 26 proteasome which is involved in the ATP-dependent degradation of ubiquitinated proteins. The protein is 26S proteasome regulatory subunit RPN11 (RPN11) of Candida glabrata (strain ATCC 2001 / BCRC 20586 / JCM 3761 / NBRC 0622 / NRRL Y-65 / CBS 138) (Yeast).